The chain runs to 229 residues: Cytidylate kinase (229 aa).

12-20 (GPSGAGKGT) contacts ATP.

It belongs to the cytidylate kinase family. Type 1 subfamily.

The protein resides in the cytoplasm. The catalysed reaction is CMP + ATP = CDP + ADP. It catalyses the reaction dCMP + ATP = dCDP + ADP. This is Cytidylate kinase from Serratia proteamaculans (strain 568).